Here is a 944-residue protein sequence, read N- to C-terminus: Isoleucine--tRNA ligase (944 aa).

The 'HIGH' region motif lies at P58–H68. Residue E568 participates in L-isoleucyl-5'-AMP binding. The short motif at K609 to S613 is the 'KMSKS' region element. Residue K612 participates in ATP binding. Residues C907, C910, C927, and C930 each coordinate Zn(2+).

It belongs to the class-I aminoacyl-tRNA synthetase family. IleS type 1 subfamily. As to quaternary structure, monomer. Zn(2+) serves as cofactor.

Its subcellular location is the cytoplasm. The catalysed reaction is tRNA(Ile) + L-isoleucine + ATP = L-isoleucyl-tRNA(Ile) + AMP + diphosphate. In terms of biological role, catalyzes the attachment of isoleucine to tRNA(Ile). As IleRS can inadvertently accommodate and process structurally similar amino acids such as valine, to avoid such errors it has two additional distinct tRNA(Ile)-dependent editing activities. One activity is designated as 'pretransfer' editing and involves the hydrolysis of activated Val-AMP. The other activity is designated 'posttransfer' editing and involves deacylation of mischarged Val-tRNA(Ile). In Psychromonas ingrahamii (strain DSM 17664 / CCUG 51855 / 37), this protein is Isoleucine--tRNA ligase.